We begin with the raw amino-acid sequence, 328 residues long: Renalase (328 aa).

Residues alanine 13, 32–33 (DK), arginine 40, and 56–57 (QY) each bind FAD. Residues 57–61 (YFTAR) and 96–98 (SPD) contribute to the substrate site. An FAD-binding site is contributed by isoleucine 128. Threonine 185 lines the substrate pocket. FAD is bound at residue aspartate 302. Arginine 308 provides a ligand contact to substrate. Residue valine 309 participates in FAD binding.

Belongs to the bacterial renalase family. It depends on FAD as a cofactor.

The enzyme catalyses 1,2-dihydro-beta-NAD + O2 + H(+) = H2O2 + NAD(+). It catalyses the reaction 1,2-dihydro-beta-NADP + O2 + H(+) = H2O2 + NADP(+). It carries out the reaction 1,6-dihydro-beta-NADP + O2 + H(+) = H2O2 + NADP(+). The catalysed reaction is 1,6-dihydro-beta-NAD + O2 + H(+) = H2O2 + NAD(+). Functionally, catalyzes the oxidation of the 1,2-dihydro- and 1,6-dihydro- isomeric forms of beta-NAD(P) back to beta-NAD(P)+. Has a preference for 1,2-dihydro-beta-NAD as substrate. May serve to protect primary metabolism dehydrogenases from inhibition by the 1,2-dihydro- and 1,6-dihydro-beta-NAD(P) isomers. The polypeptide is Renalase (Pseudomonas syringae pv. tomato (strain ATCC BAA-871 / DC3000)).